A 610-amino-acid polypeptide reads, in one-letter code: Glutamine--fructose-6-phosphate aminotransferase [isomerizing] (610 aa).

Cys2 acts as the Nucleophile; for GATase activity in catalysis. The 220-residue stretch at 2–221 (CGIVGAVAQR…DGDVVDLQLA (220 aa)) folds into the Glutamine amidotransferase type-2 domain. SIS domains lie at 286-426 (AYKV…TRGR) and 459-600 (WADR…VDKP). The active-site For Fru-6P isomerization activity is the Lys605.

In terms of assembly, homodimer.

It localises to the cytoplasm. It carries out the reaction D-fructose 6-phosphate + L-glutamine = D-glucosamine 6-phosphate + L-glutamate. In terms of biological role, catalyzes the first step in hexosamine metabolism, converting fructose-6P into glucosamine-6P using glutamine as a nitrogen source. The polypeptide is Glutamine--fructose-6-phosphate aminotransferase [isomerizing] (Bordetella bronchiseptica (strain ATCC BAA-588 / NCTC 13252 / RB50) (Alcaligenes bronchisepticus)).